The sequence spans 161 residues: Anaerobic nitrite reductase Glb1-2 (161 aa).

The Globin domain maps to 9-158 (AFTEEQEALV…LASAIIAEMK (150 aa)). Positions 42–46 (EIAPP) match the Homodimerization motif. Heme b is bound by residues S52, K66, H70, K100, T104, and H105. The short motif at 112–124 (PEHFEVTKQALLD) is the Homodimerization element.

The protein belongs to the plant globin family. As to quaternary structure, homodimer. Heme b serves as cofactor. In terms of tissue distribution, mainly expressed in root nodules and leaves, and, to a lower extent, in roots, stems, flowers and fruits. Accumulates in mature root nodules.

It catalyses the reaction Fe(III)-heme b-[protein] + nitric oxide + H2O = Fe(II)-heme b-[protein] + nitrite + 2 H(+). Its function is as follows. Phytoglobin that reduces nitrite to nitric oxide (NO) under anoxic conditions (e.g. during flooding or in waterlogged soil) and upon root nodulation. Required for general plant development and during nodulation, especially for the onset of symbiosis. Monitors nitric oxide (NO) levels during early phase of the nitrogen-fixing symbiosis and buffers oxygen in functioning nodules. Necessary for the production of pods. May not function as an oxygen storage or transport protein. Has an unusually high affinity for O(2) through a hexacoordinate heme iron because of a very low dissociation constant. In Lotus japonicus (Lotus corniculatus var. japonicus), this protein is Anaerobic nitrite reductase Glb1-2.